A 79-amino-acid polypeptide reads, in one-letter code: Short neurotoxin 4 (79 aa).

Residues 1 to 21 (MKTLLLTLVMVTIMCLDLGYT) form the signal peptide. Disulfide bonds link Cys-24–Cys-41, Cys-34–Cys-59, and Cys-63–Cys-71.

This sequence belongs to the three-finger toxin family. Short-chain subfamily. Type III alpha-neurotoxin sub-subfamily. Expressed by the venom gland.

Its subcellular location is the secreted. Functionally, binds with high affinity to muscle nicotinic acetylcholine receptor (nAChR) and hinders acetylcholine binding to the receptor, thereby impairing neuromuscular transmission. Causes muscle paralysis, spasms and increased respiration. In Pseudonaja textilis (Eastern brown snake), this protein is Short neurotoxin 4.